Reading from the N-terminus, the 502-residue chain is Putative ZDHHC-type palmitoyltransferase 3 (502 aa).

Residues 1-80 (MVNNNNKNNK…ESTNENNKKL (80 aa)) are disordered. Positions 10-30 (KINDRENEENEKNKKKDKIYE) are enriched in basic and acidic residues. The segment covering 31 to 52 (NKIGINENNNENNNYQNENFIY) has biased composition (low complexity). A glycan (N-linked (GlcNAc...) asparagine) is linked at Asn-58. Residues 59–73 (DTQEGDISEIQEEST) are compositionally biased toward acidic residues. Helical transmembrane passes span 104–124 (FFIV…IKLV) and 134–154 (LEIS…YNLY). Residues 200–281 (IANDDPISSS…NNNNNNNKNQ (82 aa)) are disordered. Low complexity predominate over residues 203-212 (DDPISSSSDF). Residues 213 to 222 (SDSDDDDQDE) show a composition bias toward acidic residues. Residues 248-280 (NSNNNNSNNNNNNNKNRNRNNNNNNNNNNNNKN) are compositionally biased toward low complexity. Asn-252 and Asn-280 each carry an N-linked (GlcNAc...) asparagine glycan. One can recognise a DHHC domain in the interval 299–349 (KFCITCGLYREPRSFHCSTCNNCVENFDHHCVWIGNCIGRRNYREFFYFIT). Cys-329 (S-palmitoyl cysteine intermediate) is an active-site residue. A helical transmembrane segment spans residues 344–364 (FFYFITTTLIYALYLLSMSIV). Asn-371, Asn-388, and Asn-393 each carry an N-linked (GlcNAc...) asparagine glycan. Residues 419 to 439 (GLCIFIIIFGFIMSLLLGFLV) traverse the membrane as a helical segment. Asn-449, Asn-483, and Asn-494 each carry an N-linked (GlcNAc...) asparagine glycan.

The protein belongs to the DHHC palmitoyltransferase family.

It is found in the membrane. The enzyme catalyses L-cysteinyl-[protein] + hexadecanoyl-CoA = S-hexadecanoyl-L-cysteinyl-[protein] + CoA. This chain is Putative ZDHHC-type palmitoyltransferase 3, found in Dictyostelium discoideum (Social amoeba).